Reading from the N-terminus, the 82-residue chain is Small ribosomal subunit protein uS17 (82 aa).

It belongs to the universal ribosomal protein uS17 family. In terms of assembly, part of the 30S ribosomal subunit.

Its function is as follows. One of the primary rRNA binding proteins, it binds specifically to the 5'-end of 16S ribosomal RNA. The protein is Small ribosomal subunit protein uS17 of Tolumonas auensis (strain DSM 9187 / NBRC 110442 / TA 4).